Here is a 283-residue protein sequence, read N- to C-terminus: 4-diphosphocytidyl-2-C-methyl-D-erythritol kinase (283 aa).

K12 is a catalytic residue. 99–109 is an ATP binding site; the sequence is PLAAGIGGGSA. The active site involves D141.

The protein belongs to the GHMP kinase family. IspE subfamily.

It catalyses the reaction 4-CDP-2-C-methyl-D-erythritol + ATP = 4-CDP-2-C-methyl-D-erythritol 2-phosphate + ADP + H(+). The protein operates within isoprenoid biosynthesis; isopentenyl diphosphate biosynthesis via DXP pathway; isopentenyl diphosphate from 1-deoxy-D-xylulose 5-phosphate: step 3/6. In terms of biological role, catalyzes the phosphorylation of the position 2 hydroxy group of 4-diphosphocytidyl-2C-methyl-D-erythritol. This chain is 4-diphosphocytidyl-2-C-methyl-D-erythritol kinase, found in Sphingopyxis alaskensis (strain DSM 13593 / LMG 18877 / RB2256) (Sphingomonas alaskensis).